A 553-amino-acid polypeptide reads, in one-letter code: Solute carrier family 22 member 12 (553 aa).

A helical membrane pass occupies residues 16–36; the sequence is FQLLQAVALVTPILWVTTQNM. N-linked (GlcNAc...) asparagine glycans are attached at residues Asn-56, Asn-102, and Asn-107. The next 11 membrane-spanning stretches (helical) occupy residues 146–166, 182–202, 204–224, 232–252, 260–280, 351–371, 378–398, 407–427, 435–455, 466–486, and 495–515; these read PMAQ…CGHA, LVSV…YCLF, FLVA…LMEW, LMMT…GSVA, MLQL…WWLP, FISM…ALDL, IFLL…GSLL, LCQA…ILVP, SSLA…VTIF, MTAV…GPLV, and WLPL…ALLL. Ser-534 bears the Phosphoserine mark.

The protein belongs to the major facilitator (TC 2.A.1) superfamily. Organic cation transporter (TC 2.A.1.19) family. Interacts with PDZK1. Post-translationally, N-glycosylated. As to expression, expressed in the proximal tubular epithelial cells in kidney.

The protein resides in the apical cell membrane. The enzyme catalyses urate(out) + (S)-lactate(in) = urate(in) + (S)-lactate(out). The catalysed reaction is nicotinate(in) + urate(out) = nicotinate(out) + urate(in). It carries out the reaction urate(out) + n chloride(in) = urate(in) + n chloride(out). It catalyses the reaction orotate(out) + nicotinate(in) = orotate(in) + nicotinate(out). Functionally, electroneutral antiporter that translocates urate across the apical membrane of proximal tubular cells in exchange for monovalent organic or inorganic anions. Involved in renal reabsorption of urate and helps maintaining blood levels of uric acid. Mediates urate uptake by an exchange with organic anions such as (S)-lactate and nicotinate, and inorganic anion Cl(-). Other inorganic anions such as Br(-), I(-) and NO3(-) may also act as counteranions that exchange for urate. Also mediates orotate tubular uptake coupled with nicotinate efflux and to a lesser extent with lactate efflux, therefore displaying a potential role in orotate renal reabsorption. Orotate transport is Cl(-)-dependent. The polypeptide is Solute carrier family 22 member 12 (Slc22a12) (Rattus norvegicus (Rat)).